We begin with the raw amino-acid sequence, 2711 residues long: Chromodomain-helicase-DNA-binding protein 6 (2711 aa).

Basic and acidic residues-rich tracts occupy residues 1–12 (MKMKIQKKEKQL), 100–115 (EPGE…DREP), 122–151 (EPKE…DGVK), and 158–171 (EASG…KRSC). Disordered stretches follow at residues 1–52 (MKMK…EEAA) and 66–243 (EEAD…QVKR). Residues 1–746 (MKMKIQKKEK…MMELRKCCNH (746 aa)) are required for DNA-dependent ATPase activity. Positions 214 to 224 (SLPNPSLQSPE) are enriched in low complexity. Chromo domains lie at 291 to 342 (NIIE…KDPR) and 374 to 438 (IEID…KHVE). Residues 472–646 (LFNWYNRKNC…FSLLNFLEPS (175 aa)) enclose the Helicase ATP-binding domain. 485-492 (DEMGLGKT) lines the ATP pocket. The DEAH box motif lies at 597–600 (DEAH). Residues 786–955 (LIDKLLPKLI…LSKMEVEDLL (170 aa)) form the Helicase C-terminal domain. The interval 1318-1389 (SLSAEQGVTD…SDPDKSPWPV (72 aa)) is disordered. Residues 1320-1329 (SAEQGVTDGT) show a composition bias toward polar residues. The segment covering 1332–1350 (IPERGNIDKEDSAEDKLDG) has biased composition (basic and acidic residues). The Myb-like domain maps to 1448-1502 (RWTRREQADFYRTVSSFGVVYDQEKKAFDWTQFRIISRLDKKSDESLEHYFYSFV). Phosphoserine is present on S1865. Disordered regions lie at residues 1951–1978 (SEDS…TVEG), 1997–2059 (EPWK…ASGI), 2124–2147 (LPTP…ATEH), 2321–2350 (TTLS…QAEK), 2373–2419 (GFGT…RGFL), 2550–2602 (SASL…ITTS), and 2641–2711 (RHSE…EDTN). The span at 2017–2036 (SEPKPEDMDFENKDDYEKDG) shows a compositional bias: basic and acidic residues. Composition is skewed to low complexity over residues 2130–2140 (SSSAGSRSSLS) and 2333–2349 (ATSS…SQAE). The segment covering 2550–2563 (SASLASTKSGTSAT) has biased composition (low complexity). Basic and acidic residues predominate over residues 2565–2586 (KSTEDKLSGHDVNTDALVDDKP). Polar residues-rich tracts occupy residues 2591–2602 (FSDQSEPTITTS) and 2677–2688 (SDQNCTESSATV). The span at 2690–2711 (PEREHVAQAREEGLKDSNEDTN) shows a compositional bias: basic and acidic residues.

It belongs to the SNF2/RAD54 helicase family. Interacts with NFE2L2; involved in activation of the transcription. Widely expressed.

It localises to the nucleus. Its subcellular location is the nucleoplasm. The catalysed reaction is ATP + H2O = ADP + phosphate + H(+). In terms of biological role, ATP-dependent chromatin-remodeling factor. Regulates transcription by disrupting nucleosomes in a largely non-sliding manner which strongly increases the accessibility of chromatin. Activates transcription of specific genes in response to oxidative stress through interaction with NFE2L2. The sequence is that of Chromodomain-helicase-DNA-binding protein 6 (Chd6) from Mus musculus (Mouse).